Here is a 513-residue protein sequence, read N- to C-terminus: Putative ribose/galactose/methyl galactoside import ATP-binding protein 2 (513 aa).

ABC transporter domains follow at residues 24–260 (LSAE…VGRE) and 270–510 (VPIG…VMEL). ATP is bound at residue 56–63 (GENGAGKS).

Belongs to the ABC transporter superfamily. Carbohydrate importer 2 (CUT2) (TC 3.A.1.2) family.

The protein localises to the cell inner membrane. The enzyme catalyses D-ribose(out) + ATP + H2O = D-ribose(in) + ADP + phosphate + H(+). It catalyses the reaction D-galactose(out) + ATP + H2O = D-galactose(in) + ADP + phosphate + H(+). Functionally, part of an ABC transporter complex involved in carbohydrate import. Could be involved in ribose, galactose and/or methyl galactoside import. Responsible for energy coupling to the transport system. The polypeptide is Putative ribose/galactose/methyl galactoside import ATP-binding protein 2 (Rhizobium etli (strain ATCC 51251 / DSM 11541 / JCM 21823 / NBRC 15573 / CFN 42)).